We begin with the raw amino-acid sequence, 235 residues long: Phosphoribosylaminoimidazole-succinocarboxamide synthase (235 aa).

The protein belongs to the SAICAR synthetase family.

The catalysed reaction is 5-amino-1-(5-phospho-D-ribosyl)imidazole-4-carboxylate + L-aspartate + ATP = (2S)-2-[5-amino-1-(5-phospho-beta-D-ribosyl)imidazole-4-carboxamido]succinate + ADP + phosphate + 2 H(+). Its pathway is purine metabolism; IMP biosynthesis via de novo pathway; 5-amino-1-(5-phospho-D-ribosyl)imidazole-4-carboxamide from 5-amino-1-(5-phospho-D-ribosyl)imidazole-4-carboxylate: step 1/2. In Clostridium beijerinckii (strain ATCC 51743 / NCIMB 8052) (Clostridium acetobutylicum), this protein is Phosphoribosylaminoimidazole-succinocarboxamide synthase.